The sequence spans 444 residues: Phosphoglucosamine mutase (444 aa).

Ser-102 functions as the Phosphoserine intermediate in the catalytic mechanism. Ser-102, Asp-241, Asp-243, and Asp-245 together coordinate Mg(2+). At Ser-102 the chain carries Phosphoserine.

It belongs to the phosphohexose mutase family. The cofactor is Mg(2+). In terms of processing, activated by phosphorylation.

The catalysed reaction is alpha-D-glucosamine 1-phosphate = D-glucosamine 6-phosphate. Functionally, catalyzes the conversion of glucosamine-6-phosphate to glucosamine-1-phosphate. This is Phosphoglucosamine mutase from Pasteurella multocida (strain Pm70).